The sequence spans 276 residues: NAD kinase (276 aa).

The active-site Proton acceptor is the aspartate 61. Residues 61–62 (DG), 134–135 (ND), arginine 145, lysine 162, aspartate 164, valine 172, 175–180 (TAYSFS), and glutamine 234 contribute to the NAD(+) site.

Belongs to the NAD kinase family. Requires a divalent metal cation as cofactor.

The protein localises to the cytoplasm. The enzyme catalyses NAD(+) + ATP = ADP + NADP(+) + H(+). Functionally, involved in the regulation of the intracellular balance of NAD and NADP, and is a key enzyme in the biosynthesis of NADP. Catalyzes specifically the phosphorylation on 2'-hydroxyl of the adenosine moiety of NAD to yield NADP. The protein is NAD kinase of Clostridium perfringens (strain ATCC 13124 / DSM 756 / JCM 1290 / NCIMB 6125 / NCTC 8237 / Type A).